The chain runs to 89 residues: Large ribosomal subunit protein bL27 (89 aa).

Positions 1–20 (MAHKKAGGSSRNGRDSAGRR) are disordered.

This sequence belongs to the bacterial ribosomal protein bL27 family.

The protein is Large ribosomal subunit protein bL27 of Zymomonas mobilis subsp. mobilis (strain ATCC 31821 / ZM4 / CP4).